The following is a 214-amino-acid chain: Probable transaldolase (214 aa).

Lysine 83 acts as the Schiff-base intermediate with substrate in catalysis.

The protein belongs to the transaldolase family. Type 3B subfamily.

The protein localises to the cytoplasm. It catalyses the reaction D-sedoheptulose 7-phosphate + D-glyceraldehyde 3-phosphate = D-erythrose 4-phosphate + beta-D-fructose 6-phosphate. It participates in carbohydrate degradation; pentose phosphate pathway; D-glyceraldehyde 3-phosphate and beta-D-fructose 6-phosphate from D-ribose 5-phosphate and D-xylulose 5-phosphate (non-oxidative stage): step 2/3. Functionally, transaldolase is important for the balance of metabolites in the pentose-phosphate pathway. This chain is Probable transaldolase, found in Geobacter metallireducens (strain ATCC 53774 / DSM 7210 / GS-15).